Here is a 274-residue protein sequence, read N- to C-terminus: uncharacterized protein (274 aa).

This sequence belongs to the type II cytokine receptor family.

This is an uncharacterized protein from Sus scrofa (Pig).